Consider the following 397-residue polypeptide: Odorant receptor 22b (397 aa).

The Cytoplasmic portion of the chain corresponds to methionine 1–lysine 49. The helical transmembrane segment at leucine 50–glutamate 70 threads the bilayer. Topologically, residues tyrosine 71–serine 85 are extracellular. A helical membrane pass occupies residues serine 86 to methionine 105. At glycine 106 to cysteine 143 the chain is on the cytoplasmic side. Residues tyrosine 144–methionine 164 form a helical membrane-spanning segment. Residues lysine 165–arginine 194 lie on the Extracellular side of the membrane. A helical transmembrane segment spans residues glycine 195–alanine 215. The Cytoplasmic portion of the chain corresponds to arginine 216–threonine 268. A helical transmembrane segment spans residues isoleucine 269 to phenylalanine 289. At phenylalanine 290 to threonine 295 the chain is on the extracellular side. The chain crosses the membrane as a helical span at residues glycine 296 to leucine 316. Over cysteine 317–leucine 347 the chain is Cytoplasmic. Residues valine 348–isoleucine 368 traverse the membrane as a helical segment. Residues serine 369–glutamine 397 are Extracellular-facing.

The protein belongs to the insect chemoreceptor superfamily. Heteromeric odorant receptor channel (TC 1.A.69) family. Or2a subfamily. As to quaternary structure, interacts with Orco, via conserved C-terminal cytoplasmic loops. Complexes exist early in the endomembrane system in olfactory sensory neurons (OSNs), coupling these complexes to the conserved ciliary trafficking pathway. Expressed with Orco in 20-22 sensory neurons on the medial-proximal edge of the antenna. This expression pattern matches the distribution of the large sensilla basiconica. Expression is first seen at 60 hours APF in a subset of cells restricted to a subregion of the developing antenna. Expression continues throughout antennal development. Expressed in the ab3A neuron which responds to ethyl butyrate.

It localises to the cell membrane. In terms of biological role, odorant receptor which mediates acceptance or avoidance behavior, depending on its substrates. The odorant receptor repertoire encodes a large collection of odor stimuli that vary widely in identity, intensity, and duration. Involved in the behavioral responses to esters. Complexes with Orco to form odorant-sensing units, providing sensitive and prolonged odorant signaling and calcium permeability. They are necessary and sufficient to promote functional reconstitution of odor-evoked signaling in sensory neurons that normally respond only to carbon dioxide. This chain is Odorant receptor 22b (Or22b), found in Drosophila melanogaster (Fruit fly).